A 566-amino-acid polypeptide reads, in one-letter code: Transcription factor atf1 (566 aa).

Over residues 1-42 (MSPSPVNTSTEPASVAAVSNGNATASSTQVPENNQSDSFAPP) the composition is skewed to polar residues. Disordered stretches follow at residues 1–83 (MSPS…FVGS), 96–117 (SFGS…PSLS), 315–345 (QQQT…PQAS), and 357–479 (SQQF…KSFL). The segment covering 43-53 (SNNSQQNQQSS) has biased composition (low complexity). Polar residues-rich tracts occupy residues 65–76 (ANANPADQSDGV) and 97–106 (FGSTASVGQG). Low complexity predominate over residues 107–117 (NPSLNRNPSLS). 2 stretches are compositionally biased toward polar residues: residues 379 to 412 (TLRQ…TANS) and 421 to 460 (TDYS…YSKG). Over residues 466–479 (SKNETDEEKRKSFL) the composition is skewed to basic and acidic residues. The 64-residue stretch at 472 to 535 (EEKRKSFLER…VSLKTLLIAH (64 aa)) folds into the bZIP domain. The tract at residues 474–503 (KRKSFLERNRQAALKCRQRKKQWLSNLQAK) is basic motif. The tract at residues 514–528 (LSAQVSALREEIVSL) is leucine-zipper.

The protein belongs to the bZIP family. In terms of assembly, heterodimer of pcr1/mts2 and atf1/mts1. Phosphorylated by sty1/spc1.

It localises to the nucleus. Functionally, transcription factor required for sexual development and entry into stationary phase. Binds and activates CRE sites (cAMP-response elements, also known as M26 meiotic recombination hotspots). This is Transcription factor atf1 (atf1) from Schizosaccharomyces pombe (strain 972 / ATCC 24843) (Fission yeast).